A 238-amino-acid polypeptide reads, in one-letter code: 2,3,4,5-tetrahydropyridine-2,6-dicarboxylate N-acetyltransferase (238 aa).

Belongs to the transferase hexapeptide repeat family. DapH subfamily.

The catalysed reaction is (S)-2,3,4,5-tetrahydrodipicolinate + acetyl-CoA + H2O = L-2-acetamido-6-oxoheptanedioate + CoA. The protein operates within amino-acid biosynthesis; L-lysine biosynthesis via DAP pathway; LL-2,6-diaminopimelate from (S)-tetrahydrodipicolinate (acetylase route): step 1/3. Its function is as follows. Catalyzes the transfer of an acetyl group from acetyl-CoA to tetrahydrodipicolinate. This chain is 2,3,4,5-tetrahydropyridine-2,6-dicarboxylate N-acetyltransferase, found in Clostridioides difficile (strain 630) (Peptoclostridium difficile).